The chain runs to 236 residues: MEQMDAHQIISFIQNSKKATPVKVYLKGDLEKIDFPSDVKTFITGNAGTIFGEWAVVEPLLEANKANIEDYVIENDRRNSAIPLLDMKNINARIEPGAVIRDQVTIGDNAVIMMGASINIGSVIGDGTMIDMNVVLGGRATVGKNCHIGAGSVLAGVVEPPSAQPVIVEDNVVVGANVVVLEGVRIGEGAVVAAGAIVTKDVAPGTVVAGIPARELKKLDAKTASKTEIMQELRQL.

The protein belongs to the transferase hexapeptide repeat family. DapH subfamily.

It carries out the reaction (S)-2,3,4,5-tetrahydrodipicolinate + acetyl-CoA + H2O = L-2-acetamido-6-oxoheptanedioate + CoA. The protein operates within amino-acid biosynthesis; L-lysine biosynthesis via DAP pathway; LL-2,6-diaminopimelate from (S)-tetrahydrodipicolinate (acetylase route): step 1/3. Its function is as follows. Catalyzes the transfer of an acetyl group from acetyl-CoA to tetrahydrodipicolinate. The protein is 2,3,4,5-tetrahydropyridine-2,6-dicarboxylate N-acetyltransferase of Listeria innocua serovar 6a (strain ATCC BAA-680 / CLIP 11262).